A 268-amino-acid polypeptide reads, in one-letter code: Phycocyanobilin lyase subunit alpha (268 aa).

Belongs to the CpcE/RpcE/PecE family. CpcE and CpcF associate to form a lyase.

In terms of biological role, required for the chromophorylation of the cpcA gene product. This chain is Phycocyanobilin lyase subunit alpha (cpcE), found in Picosynechococcus sp. (strain ATCC 27264 / PCC 7002 / PR-6) (Agmenellum quadruplicatum).